The primary structure comprises 411 residues: 2,3-bisphosphoglycerate-independent phosphoglycerate mutase (411 aa).

The protein belongs to the BPG-independent phosphoglycerate mutase family. A-PGAM subfamily. In terms of assembly, homotetramer. It depends on Mg(2+) as a cofactor.

It catalyses the reaction (2R)-2-phosphoglycerate = (2R)-3-phosphoglycerate. The protein operates within carbohydrate degradation; glycolysis; pyruvate from D-glyceraldehyde 3-phosphate: step 3/5. With respect to regulation, inhibited to approximately 20% by EDTA. Catalyzes the interconversion of 2-phosphoglycerate and 3-phosphoglycerate. The polypeptide is 2,3-bisphosphoglycerate-independent phosphoglycerate mutase (apgM) (Pyrococcus furiosus (strain ATCC 43587 / DSM 3638 / JCM 8422 / Vc1)).